The following is a 401-amino-acid chain: Chaperone protein DnaJ (401 aa).

Residues 4–69 enclose the J domain; it reads DYYEVLGVSR…DKRRRYDQFG (66 aa). The CR-type zinc-finger motif lies at 156–237; that stretch reads GVEKTLKIKK…CYGEGIKQGD (82 aa). The Zn(2+) site is built by Cys-169, Cys-172, Cys-185, Cys-188, Cys-211, Cys-214, Cys-225, and Cys-228. CXXCXGXG motif repeat units follow at residues 169–176, 185–192, 211–218, and 225–232; these read CKECNGSG, CQTCHGSG, CPTCGGEG, and CTACYGEG. The interval 377 to 401 is disordered; that stretch reads AFSPSGSNNDKEEKSFFEKARDIFS. Positions 385 to 401 are enriched in basic and acidic residues; sequence NDKEEKSFFEKARDIFS.

This sequence belongs to the DnaJ family. As to quaternary structure, homodimer. Requires Zn(2+) as cofactor.

It is found in the cytoplasm. Participates actively in the response to hyperosmotic and heat shock by preventing the aggregation of stress-denatured proteins and by disaggregating proteins, also in an autonomous, DnaK-independent fashion. Unfolded proteins bind initially to DnaJ; upon interaction with the DnaJ-bound protein, DnaK hydrolyzes its bound ATP, resulting in the formation of a stable complex. GrpE releases ADP from DnaK; ATP binding to DnaK triggers the release of the substrate protein, thus completing the reaction cycle. Several rounds of ATP-dependent interactions between DnaJ, DnaK and GrpE are required for fully efficient folding. Also involved, together with DnaK and GrpE, in the DNA replication of plasmids through activation of initiation proteins. This chain is Chaperone protein DnaJ, found in Chlorobium limicola (strain DSM 245 / NBRC 103803 / 6330).